A 335-amino-acid polypeptide reads, in one-letter code: Cytoskeleton protein RodZ (335 aa).

Topologically, residues methionine 1 to glycine 111 are cytoplasmic. Positions leucine 19 to leucine 71 constitute an HTH cro/C1-type domain. The H-T-H motif DNA-binding region spans glutamine 30 to glutamate 49. Residues tryptophan 112–tryptophan 132 form a helical; Signal-anchor for type II membrane protein membrane-spanning segment. Topologically, residues tryptophan 133–glutamine 335 are periplasmic. The span at aspartate 148–leucine 164 shows a compositional bias: polar residues. Residues aspartate 148 to threonine 244 are disordered. Composition is skewed to low complexity over residues aspartate 165–glutamine 205 and aspartate 217–aspartate 239.

It belongs to the RodZ family.

Its subcellular location is the cell inner membrane. Functionally, cytoskeletal protein that is involved in cell-shape control through regulation of the length of the long axis. The sequence is that of Cytoskeleton protein RodZ from Escherichia coli O127:H6 (strain E2348/69 / EPEC).